Here is a 203-residue protein sequence, read N- to C-terminus: Large ribosomal subunit protein uL13 (203 aa).

The residue at position 2 (A2) is an N-acetylalanine. Position 59 is a citrulline (R59). At S77 the chain carries Phosphoserine; by ZIPK/DAPK3. The residue at position 140 (R140) is a Citrulline. K191 bears the N6-acetyllysine mark.

The protein belongs to the universal ribosomal protein uL13 family. As to quaternary structure, component of the 60S ribosome. Component of the GAIT complex. Interacts with EIF4G1. Post-translationally, phosphorylation at Ser-77 upon interferon-gamma treatment in macrophages involves a DAPK1-DAPK3 kinase cascade and is causing release from the ribosome, association with the GAIT complex and subsequent involvement in transcript-selective translation inhibition. Citrullinated by PADI4.

The protein localises to the cytoplasm. Functionally, associated with ribosomes but is not required for canonical ribosome function and has extra-ribosomal functions. Component of the GAIT (gamma interferon-activated inhibitor of translation) complex which mediates interferon-gamma-induced transcript-selective translation inhibition in inflammation processes. Upon interferon-gamma activation and subsequent phosphorylation dissociates from the ribosome and assembles into the GAIT complex which binds to stem loop-containing GAIT elements in the 3'-UTR of diverse inflammatory mRNAs (such as ceruplasmin) and suppresses their translation. In the GAIT complex interacts with m7G cap-bound eIF4G at or near the eIF3-binding site and blocks the recruitment of the 43S ribosomal complex. Involved in methylation of rRNA. The sequence is that of Large ribosomal subunit protein uL13 (Rpl13a) from Mus musculus (Mouse).